A 774-amino-acid chain; its full sequence is Beta-xylosidase/alpha-L-arabinofuranosidase 1 (774 aa).

The signal sequence occupies residues Ala-1–Gly-33. Asn-48 and Asn-136 each carry an N-linked (GlcNAc...) asparagine glycan. Asp-303 is an active-site residue. Asn-437 and Asn-530 each carry an N-linked (GlcNAc...) asparagine glycan.

It belongs to the glycoside hydrolase 3 family. Proteolytically cleaved in roots to form a 65 kDa protein.

The protein resides in the secreted. The protein localises to the extracellular space. It is found in the extracellular matrix. The enzyme catalyses Hydrolysis of (1-&gt;4)-beta-D-xylans, to remove successive D-xylose residues from the non-reducing termini.. It carries out the reaction Hydrolysis of terminal non-reducing alpha-L-arabinofuranoside residues in alpha-L-arabinosides.. In terms of biological role, a bifunctional beta-xylosidase/alpha-L-arabinosidase, exo-enzyme that acts synergistically with endohydrolases. Releases xylose and arabinose from cell walls. Does not cleave xylan from oat spelts although xylan from oat spelts was degraded to xylose when this enzyme was used in combination with xylanase. Also releases xylose and arabinose from aryl glycosides, xylo-oligosaccharides, arabinan from sugar beet and arabino-oligosaccharides, arabinan from sugar beet and arabinoxylan from wheat. The chain is Beta-xylosidase/alpha-L-arabinofuranosidase 1 from Medicago sativa subsp. varia (Alfalfa).